A 419-amino-acid polypeptide reads, in one-letter code: DNA ligase (419 aa).

The segment at 1-120 (MLSQFPGQCS…ARQKRGAHTN (120 aa)) is NTD. The tract at residues 121-317 (RGMIPPMLVK…NYHSPHLAKL (197 aa)) is AD domain. The ATP site is built by His149, Lys151, Glu203, and Phe232. Residue Lys151 is the N6-AMP-lysine intermediate of the active site. Glu203 is an a divalent metal cation binding site. Glu291 is a binding site for a divalent metal cation. Residues Ile294 and Lys316 each coordinate ATP. Positions 318 to 419 (KPLLDAEFIL…REPINVLEII (102 aa)) are OB domain.

Belongs to the ATP-dependent DNA ligase family. It depends on a divalent metal cation as a cofactor.

It localises to the virion. The enzyme catalyses ATP + (deoxyribonucleotide)n-3'-hydroxyl + 5'-phospho-(deoxyribonucleotide)m = (deoxyribonucleotide)n+m + AMP + diphosphate.. Functionally, very low-fidelity DNA ligase that seals nicks in double-stranded DNA during DNA repair. Together with the viral repair DNA polymerase X, fills the single nucleotide gaps generated by the AP endonuclease. It is not essential for viral replication and recombination. Displays a very low adenylation activity towards DNA with 3'-dideoxy- or 3'-amino-terminated nicks compared to regular nick DNA. In Ornithodoros (relapsing fever ticks), this protein is DNA ligase (LIG).